The sequence spans 431 residues: MIEQADEESVFRNRNLVEPDTIIDRDRIVGRDDQLRTVVSNLRKVLNENRPPNLLLYGPAGTGKSLIFDAVARQIRDISKNRGYEFGTLRINCQNLRSLDEAVYALVREAAHDLNEEIGVARHGVSTSTKYDRLYDLLDEGYDSVVFVLDEIDLLLGRRSSSSEPAYSDLIYQLSRASIESIDIQVSVAALTNDPEFMNNLDARAESSFNPRDIPFSDYDANQLQEILRNREDAFIQDALSEDVIPLTSAFAAQSHGDARKAIDLLRKAGDVANENGDLTVTENHVREAQEDVETDRSLKLVEGLTTQKKISLYATAAVAEFGKSGSTTASSRVAFPVYQFLTDVLDADGRTRETFNNYVREVGTYGQLDHERKSLGGKQGGGMYLMYEFKRDPGEIKKRLEQDERIADLSHHEDGLNRVIQAQKRNFAED.

ATP is bound by residues 62-66 (TGKSL), Tyr219, and Arg231.

It belongs to the CDC6/cdc18 family.

Functionally, involved in regulation of DNA replication. This Haloarcula marismortui (strain ATCC 43049 / DSM 3752 / JCM 8966 / VKM B-1809) (Halobacterium marismortui) protein is ORC1-type DNA replication protein 14 (cdc6n).